We begin with the raw amino-acid sequence, 481 residues long: OTU domain-containing protein 1 (481 aa).

Disordered regions lie at residues 18–60 and 202–282; these read PTAA…AAAE and LAAA…IVSR. Over residues 38–58 the composition is skewed to low complexity; the sequence is PPGAAGAAPEPETGECQPAAA. Residues 225 to 257 show a composition bias toward basic and acidic residues; sequence GEEHLAERGPRGWERGGDRCDAPGGDAARRPDP. The span at 261–281 shows a compositional bias: low complexity; sequence APPAGSIEAAPSSAAEPVIVS. The OTU domain maps to 309–438; that stretch reads KYRFHIIPDG…NGHYDAVFDH (130 aa). A cys-loop region spans residues 314-320; the sequence is IIPDGNC. Residue Asp-317 is part of the active site. Cys-320 acts as the Nucleophile in catalysis. The tract at residues 369–379 is his-loop; that stretch reads AAQDGAWAGYP. The tract at residues 426–431 is variable-loop; the sequence is WLSNGH. The active site involves His-431. One can recognise a UIM domain in the interval 457–476; it reads KRDEELAKSMAISLSKMYIE.

It catalyses the reaction Thiol-dependent hydrolysis of ester, thioester, amide, peptide and isopeptide bonds formed by the C-terminal Gly of ubiquitin (a 76-residue protein attached to proteins as an intracellular targeting signal).. Functionally, deubiquitinating enzyme that specifically hydrolyzes 'Lys-63'-linked polyubiquitin to monoubiquitin. Required for the stability and translation of a subset mRNAs with a high abundance of rare codons by mediating deubiquitination of 40S ribosomal protein RPS10/eS10, thereby antagonizing ZNF598-mediated 40S ubiquitination. The abundance of rare codons in mRNAs can limit the translation rate and can lead to ribosome collisions that trigger activation of ribosome quality control (RQC) pathway by ZNF598. OTUD1-mediated deubiquitination prevents activation of the RQC and subsequent dissociation of ribosomes and stimulates formation of polysomes and translation. The protein is OTU domain-containing protein 1 of Homo sapiens (Human).